Consider the following 327-residue polypeptide: Malate dehydrogenase (327 aa).

11 to 17 (GAAGQIS) lines the NAD(+) pocket. Substrate-binding residues include Arg-92 and Arg-98. NAD(+) is bound by residues Asn-105, Gln-112, and 129–131 (VGN). Residues Asn-131 and Arg-162 each contribute to the substrate site. The active-site Proton acceptor is His-187.

The protein belongs to the LDH/MDH superfamily. MDH type 2 family.

It carries out the reaction (S)-malate + NAD(+) = oxaloacetate + NADH + H(+). Catalyzes the reversible oxidation of malate to oxaloacetate. This Cellvibrio japonicus (strain Ueda107) (Pseudomonas fluorescens subsp. cellulosa) protein is Malate dehydrogenase.